The primary structure comprises 149 residues: Chromophore lyase CpcS/CpeS homolog (149 aa).

It belongs to the CpcS/CpeS biliprotein lyase family.

It is found in the plastid. It localises to the chloroplast. Functionally, might function to covalently attach a chromophore to Cys residue(s) of phycobiliproteins. This is Chromophore lyase CpcS/CpeS homolog from Pyropia yezoensis (Susabi-nori).